The chain runs to 840 residues: Sorting nexin-25 (840 aa).

Positions 1–164 (MDKALKEVFD…MLLAQLAYRE (164 aa)) constitute a PXA domain. The RGS domain maps to 287–401 (QFEDILANTF…IVSDLYEKLL (115 aa)). A coiled-coil region spans residues 434-499 (TNQINEQASF…RTDLQLHMAR (66 aa)). Residues 508–628 (GMWKASITSG…AFLSPSPDYL (121 aa)) form the PX domain. Ser-665 carries the phosphoserine modification.

Belongs to the sorting nexin family.

The protein resides in the endosome membrane. Its function is as follows. May be involved in several stages of intracellular trafficking. The polypeptide is Sorting nexin-25 (SNX25) (Homo sapiens (Human)).